The chain runs to 124 residues: MTPTIFLVILCLGVASAVIVPEAQLDAELQEQKDKEVLIKAVWSKFMKTNKLHSSENDQETEGSNIEMSASGQLTDEELMKIMTTVLHPMFEEEENKPQPVVDDPEFEDYTESGDGFFVPNQPQ.

The signal sequence occupies residues methionine 1–valine 18. Disordered stretches follow at residues lysine 51–leucine 74 and phenylalanine 91–glutamine 124. Polar residues predominate over residues glutamate 62–leucine 74. Over residues aspartate 103–glutamate 112 the composition is skewed to acidic residues.

Its subcellular location is the secreted. It localises to the extracellular space. It may be a growth factor/hormone, perhaps involved in interaction between the maternal and fetal systems in maintenance of pregnancy. This Mus musculus (Mouse) protein is Trophoblast-specific protein alpha (Tpbpa).